The sequence spans 126 residues: Phosphoribosyl-AMP cyclohydrolase (126 aa).

A Mg(2+)-binding site is contributed by Asp76. Cys77 provides a ligand contact to Zn(2+). Asp78 and Asp80 together coordinate Mg(2+). Zn(2+) is bound by residues Cys94 and Cys101.

This sequence belongs to the PRA-CH family. Homodimer. The cofactor is Mg(2+). Requires Zn(2+) as cofactor.

It is found in the cytoplasm. It catalyses the reaction 1-(5-phospho-beta-D-ribosyl)-5'-AMP + H2O = 1-(5-phospho-beta-D-ribosyl)-5-[(5-phospho-beta-D-ribosylamino)methylideneamino]imidazole-4-carboxamide. It participates in amino-acid biosynthesis; L-histidine biosynthesis; L-histidine from 5-phospho-alpha-D-ribose 1-diphosphate: step 3/9. Catalyzes the hydrolysis of the adenine ring of phosphoribosyl-AMP. The sequence is that of Phosphoribosyl-AMP cyclohydrolase from Nitratidesulfovibrio vulgaris (strain ATCC 29579 / DSM 644 / CCUG 34227 / NCIMB 8303 / VKM B-1760 / Hildenborough) (Desulfovibrio vulgaris).